The primary structure comprises 100 residues: Urease subunit gamma (100 aa).

This sequence belongs to the urease gamma subunit family. In terms of assembly, heterotrimer of UreA (gamma), UreB (beta) and UreC (alpha) subunits. Three heterotrimers associate to form the active enzyme.

Its subcellular location is the cytoplasm. It carries out the reaction urea + 2 H2O + H(+) = hydrogencarbonate + 2 NH4(+). Its pathway is nitrogen metabolism; urea degradation; CO(2) and NH(3) from urea (urease route): step 1/1. The polypeptide is Urease subunit gamma (Prochlorococcus marinus (strain MIT 9301)).